The sequence spans 136 residues: Group 1 truncated hemoglobin GlbN (136 aa).

Heme is bound at residue H81.

This sequence belongs to the truncated hemoglobin family. Group I subfamily. Homodimer. Heme serves as cofactor.

In terms of biological role, binds oxygen cooperatively with very high affinity (P(50) = 0.013 mmHg at 20 degrees Celsius) because of a fast combination (25 microM(-1)sec(-1)) and a slow dissociation (0.2 sec(-1)) rate. This Mycobacterium bovis (strain ATCC BAA-935 / AF2122/97) protein is Group 1 truncated hemoglobin GlbN (glbN).